The primary structure comprises 163 residues: Dual specificity phosphatase 28 (163 aa).

A Tyrosine-protein phosphatase domain is found at 10–151 (PFARVAPALF…LQKYEQTLQA (142 aa)). The Phosphocysteine intermediate role is filled by cysteine 95.

The protein belongs to the protein-tyrosine phosphatase family. Non-receptor class dual specificity subfamily. As to quaternary structure, monomer.

It carries out the reaction O-phospho-L-tyrosyl-[protein] + H2O = L-tyrosyl-[protein] + phosphate. The catalysed reaction is O-phospho-L-seryl-[protein] + H2O = L-seryl-[protein] + phosphate. It catalyses the reaction O-phospho-L-threonyl-[protein] + H2O = L-threonyl-[protein] + phosphate. Functionally, has phosphatase activity with the synthetic substrate 6,8-difluoro-4-methylumbelliferyl phosphate (in vitro). Has almost no detectable activity with phosphotyrosine, even less activity with phosphothreonine and displays complete lack of activity with phosphoserine. The poor activity with phosphotyrosine may be due to steric hindrance by bulky amino acid sidechains that obstruct access to the active site. This chain is Dual specificity phosphatase 28 (Dusp28), found in Mus musculus (Mouse).